Consider the following 602-residue polypeptide: Translation initiation factor IF-2 (602 aa).

The region spanning lysine 112 to lysine 281 is the tr-type G domain. Positions glycine 121 to threonine 128 are G1. Residue glycine 121–threonine 128 coordinates GTP. The G2 stretch occupies residues glycine 146–histidine 150. A G3 region spans residues aspartate 167–glycine 170. Residues aspartate 167 to histidine 171 and asparagine 221 to aspartate 224 each bind GTP. Residues asparagine 221–aspartate 224 are G4. A G5 region spans residues serine 257 to leucine 259.

The protein belongs to the TRAFAC class translation factor GTPase superfamily. Classic translation factor GTPase family. IF-2 subfamily.

The protein localises to the cytoplasm. Functionally, one of the essential components for the initiation of protein synthesis. Protects formylmethionyl-tRNA from spontaneous hydrolysis and promotes its binding to the 30S ribosomal subunits. Also involved in the hydrolysis of GTP during the formation of the 70S ribosomal complex. The sequence is that of Translation initiation factor IF-2 from Mycoplasmopsis synoviae (strain 53) (Mycoplasma synoviae).